Here is a 341-residue protein sequence, read N- to C-terminus: 5-formaminoimidazole-4-carboxamide-1-(beta)-D-ribofuranosyl 5'-monophosphate synthetase (341 aa).

5-amino-1-(5-phospho-beta-D-ribosyl)imidazole-4-carboxamide is bound by residues H10 and T77. Residues 106–317 (DREMKEKLMR…YYNLLFNETM (212 aa)) form the ATP-grasp domain. Residues 132 to 188 (EKLS…VLAY) and E210 contribute to the ATP site. N238 is a binding site for 5-amino-1-(5-phospho-beta-D-ribosyl)imidazole-4-carboxamide. Mg(2+) is bound by residues E277 and E290.

The protein belongs to the phosphohexose mutase family. Mg(2+) serves as cofactor. Requires Mn(2+) as cofactor.

It carries out the reaction 5-amino-1-(5-phospho-beta-D-ribosyl)imidazole-4-carboxamide + formate + ATP = 5-formamido-1-(5-phospho-D-ribosyl)imidazole-4-carboxamide + ADP + phosphate. Its pathway is purine metabolism; IMP biosynthesis via de novo pathway; 5-formamido-1-(5-phospho-D-ribosyl)imidazole-4-carboxamide from 5-amino-1-(5-phospho-D-ribosyl)imidazole-4-carboxamide (formate route): step 1/1. Its function is as follows. Catalyzes the ATP- and formate-dependent formylation of 5-aminoimidazole-4-carboxamide-1-beta-d-ribofuranosyl 5'-monophosphate (AICAR) to 5-formaminoimidazole-4-carboxamide-1-beta-d-ribofuranosyl 5'-monophosphate (FAICAR) in the absence of folates. In Nitrosopumilus maritimus (strain SCM1), this protein is 5-formaminoimidazole-4-carboxamide-1-(beta)-D-ribofuranosyl 5'-monophosphate synthetase.